We begin with the raw amino-acid sequence, 445 residues long: Hydroxycinnamoyl-CoA:5-hydroxyanthranilate N-hydroxycinnamoyltransferase HHT4 (445 aa).

Belongs to the plant acyltransferase family.

It catalyses the reaction 5-hydroxyanthranilate + (E)-4-coumaroyl-CoA = avenanthramide A + CoA. The enzyme catalyses 5-hydroxyanthranilate + (E)-caffeoyl-CoA = avenanthramide C + CoA. Its function is as follows. Involved in the biosynthesis of avenanthramide phytoalexins, which are phenolic alkaloids found mainly in oats. Catalyzes the N-acylation of 5-hydroxyanthranilate with 4-coumaroyl-CoA or caffeoyl-CoA as acyl donors, forming avenanthramide A and avenanthramide C, respectively. Does not accept feruloyl-CoA as a substrate. The protein is Hydroxycinnamoyl-CoA:5-hydroxyanthranilate N-hydroxycinnamoyltransferase HHT4 of Avena sativa (Oat).